We begin with the raw amino-acid sequence, 701 residues long: Lutropin-choriogonadotropic hormone receptor (701 aa).

The first 26 residues, 1–26, serve as a signal peptide directing secretion; it reads MGRPSLALRLLLALLLLPPPAPLLWA. The Extracellular portion of the chain corresponds to 27–365; the sequence is LRPAPCPEPC…EDIMGYNFLR (339 aa). Asn-101 carries an N-linked (GlcNAc...) asparagine glycan. LRR repeat units lie at residues 124-149, 151-173, 174-198, 200-222, 223-246, and 250-271; these read LPRL…IFSS, FNFI…AFQG, MNNE…AFNG, TLIS…AFRG, ATGP…GLES, and LIAT…TNLL. Residues Asn-176 and Asn-197 are each glycosylated (N-linked (GlcNAc...) asparagine). 3 N-linked (GlcNAc...) asparagine glycosylation sites follow: Asn-293, Asn-301, and Asn-315. The residue at position 333 (Tyr-333) is a Sulfotyrosine. The helical transmembrane segment at 366 to 387 threads the bilayer; sequence VLIWLINILAITGNVTVLFVLL. Residues 388 to 397 are Cytoplasmic-facing; the sequence is TSRYKLTVPR. The chain crosses the membrane as a helical span at residues 398-418; it reads FLMCNLSFADFCMGLYLLLIA. Over 419 to 441 the chain is Extracellular; sequence SVDAQTKGQYYNHAIDWQTGSGC. Cysteines 441 and 516 form a disulfide. The helical transmembrane segment at 442–464 threads the bilayer; the sequence is SAAGFFTVFASELSVYTLTVITL. Residues 465–484 are Cytoplasmic-facing; that stretch reads ERWHTITYAIQLDQKLRLKH. Residues 485 to 507 traverse the membrane as a helical segment; sequence AIPVMLGGWLFSTLIAVLPLVGV. Topologically, residues 508-527 are extracellular; that stretch reads SNYMKVSICLPMDVESTLSQ. A helical membrane pass occupies residues 528 to 551; that stretch reads VYILTILILNVMAFIIICACYIKI. At 552–572 the chain is on the cytoplasmic side; it reads YFAVQNPELMATNKDTKIAKK. A helical transmembrane segment spans residues 573–596; sequence MAVLIFTDFTCMAPISFFAISAAF. At 597–607 the chain is on the extracellular side; that stretch reads KVPLITVTNSK. The chain crosses the membrane as a helical span at residues 608–629; the sequence is VLLVLFYPVNSCANPFLYAIFT. The Cytoplasmic segment spans residues 630–701; the sequence is KAFQRDFFLL…VLDKTCYKEC (72 aa). Residues Cys-645 and Cys-646 are each lipidated (S-palmitoyl cysteine).

This sequence belongs to the G-protein coupled receptor 1 family. FSH/LSH/TSH subfamily. Sulfated.

Its subcellular location is the cell membrane. Its function is as follows. Receptor for lutropin-choriogonadotropic hormone. The activity of this receptor is mediated by G proteins which activate adenylate cyclase. This is Lutropin-choriogonadotropic hormone receptor (LHCGR) from Bos taurus (Bovine).